The chain runs to 448 residues: N-succinylarginine dihydrolase (448 aa).

Substrate contacts are provided by residues 19–28, N110, and 137–138; these read GGLSYGNVAS and HR. The active site involves E174. R214 contacts substrate. H250 is an active-site residue. Substrate contacts are provided by D252 and N365. C371 functions as the Nucleophile in the catalytic mechanism.

This sequence belongs to the succinylarginine dihydrolase family. As to quaternary structure, homodimer.

The enzyme catalyses N(2)-succinyl-L-arginine + 2 H2O + 2 H(+) = N(2)-succinyl-L-ornithine + 2 NH4(+) + CO2. It functions in the pathway amino-acid degradation; L-arginine degradation via AST pathway; L-glutamate and succinate from L-arginine: step 2/5. Catalyzes the hydrolysis of N(2)-succinylarginine into N(2)-succinylornithine, ammonia and CO(2). This Pseudomonas fluorescens (strain SBW25) protein is N-succinylarginine dihydrolase.